The chain runs to 206 residues: ATP-dependent Clp protease proteolytic subunit 1 (206 aa).

Catalysis depends on S106, which acts as the Nucleophile. H131 is an active-site residue.

The protein belongs to the peptidase S14 family. As to quaternary structure, fourteen ClpP subunits assemble into 2 heptameric rings which stack back to back to give a disk-like structure with a central cavity, resembling the structure of eukaryotic proteasomes.

The protein localises to the cytoplasm. The enzyme catalyses Hydrolysis of proteins to small peptides in the presence of ATP and magnesium. alpha-casein is the usual test substrate. In the absence of ATP, only oligopeptides shorter than five residues are hydrolyzed (such as succinyl-Leu-Tyr-|-NHMec, and Leu-Tyr-Leu-|-Tyr-Trp, in which cleavage of the -Tyr-|-Leu- and -Tyr-|-Trp bonds also occurs).. Functionally, cleaves peptides in various proteins in a process that requires ATP hydrolysis. Has a chymotrypsin-like activity. Plays a major role in the degradation of misfolded proteins. The chain is ATP-dependent Clp protease proteolytic subunit 1 from Methylococcus capsulatus (strain ATCC 33009 / NCIMB 11132 / Bath).